The sequence spans 154 residues: uncharacterized protein (154 aa).

An HTH marR-type domain is found at 14-146 (AMNLYRVFAR…LIVLLKKAGI (133 aa)). The segment at residues 60–83 (LQQIGSRLLLVSGNVTYVIDKLER) is a DNA-binding region (H-T-H motif).

This is an uncharacterized protein from Bacillus subtilis (strain 168).